Consider the following 969-residue polypeptide: MFVVGQRWISESENNLGLGIVTASDNRTVTIQFPAAEEERIYALSVAPLTRVQFQKGDRINSVEGWQLDVEEVVENQGFIIYLGKRADSGEEAVLPEMQLDHKVSFSKPQDRLFSAQIDRSDRFALRYRALQHQQAQFQSPLRGMRGIRASLIPHQLHIAKEVGQRVAPRVLLADEVGLGKTIEAGMILQQQLFSGRVERVLVLVPESLQHQWLVEMLRRFNLKFSLFDEERCADFDKADEDGNDVSENPFDSEALVIASIDWLESSPNRAKQVLASNWDMLIVDEAHHLEWSENEPSVGYQFVERLSKQTSAVLLLTATPEQLGQESHFARLALLDADRFYDYNSFVAEQKDYKPVADAVATLLNDKPLSNDEQNSIADLLSEKDTEPMFKVINSEKSKENDRLQVRQELIRELIDRHGTSRVLFRNTRQGVKGFPHRVYHQITLEMPSQYTNALKVMGMMGGVTKDDQLYPERLFQRMNPAAKWADFDPRIEWLITFLKNHRDEKILVICKQADTAIALEQILREREAIRSAVFHEKMSIVERDRASAYFAQMEEGAQVLISSSIGSEGRNFQFASNLVLFNLPDNPDLLEQSIGRLDRIGQKNDIQIHVPCFENSMQMILATWYHQGLNAFEETCPMGAALFREFGEELEIFLKNPQAVGFDEFLAKTFKRQQHLKAELEQGRDRLLELNSNGGEAAQALAEAIAKEDNNPHLVNFALSLFDVIGLEQEDLGEQSIVISPTGHMLVPDFPGIAEDGTTVTFDRQLALMREDVEFLTWDHPMIRNGIDLITSGYIGKSAISLLINKNLPAGTLLLEAIYMVETQAPKGLNLTRFLPPTPVRILLDNKGNDMAAQVSFAGLEKQLKPLNKQMANKIAKMAQADIKKLIGISEQKIAAKLPELIEKASQDADSTLSAELHRLTSLQAVNKNIRSDEIEALEQQRIESLKQIALANWRLDSLRVIVSNKE.

The region spanning 162–339 (EVGQRVAPRV…FARLALLDAD (178 aa)) is the Helicase ATP-binding domain. 175–182 (DEVGLGKT) contacts ATP. The short motif at 285 to 288 (DEAH) is the DEAH box element. The Helicase C-terminal domain occupies 492-663 (RIEWLITFLK…IFLKNPQAVG (172 aa)).

The protein belongs to the SNF2/RAD54 helicase family. RapA subfamily. In terms of assembly, interacts with the RNAP. Has a higher affinity for the core RNAP than for the holoenzyme. Its ATPase activity is stimulated by binding to RNAP.

Its function is as follows. Transcription regulator that activates transcription by stimulating RNA polymerase (RNAP) recycling in case of stress conditions such as supercoiled DNA or high salt concentrations. Probably acts by releasing the RNAP, when it is trapped or immobilized on tightly supercoiled DNA. Does not activate transcription on linear DNA. Probably not involved in DNA repair. The sequence is that of RNA polymerase-associated protein RapA from Actinobacillus pleuropneumoniae serotype 3 (strain JL03).